The sequence spans 127 residues: Large ribosomal subunit protein bL17 (127 aa).

This sequence belongs to the bacterial ribosomal protein bL17 family. Part of the 50S ribosomal subunit. Contacts protein L32.

This Lactiplantibacillus plantarum (strain ATCC BAA-793 / NCIMB 8826 / WCFS1) (Lactobacillus plantarum) protein is Large ribosomal subunit protein bL17.